The sequence spans 146 residues: Arginine repressor (146 aa).

Belongs to the ArgR family.

It is found in the cytoplasm. Its pathway is amino-acid biosynthesis; L-arginine biosynthesis [regulation]. Functionally, regulates arginine biosynthesis genes. This Parabacteroides distasonis (strain ATCC 8503 / DSM 20701 / CIP 104284 / JCM 5825 / NCTC 11152) protein is Arginine repressor.